Here is a 574-residue protein sequence, read N- to C-terminus: Lysyl oxidase homolog 1 (574 aa).

The N-terminal stretch at 1-25 (MALARGSRQLGALVWGACLCVLVHG) is a signal peptide. The propeptide occupies 26-95 (QQAQPGQGSD…RRSHGSPRRR (70 aa)). Disordered stretches follow at residues 62–123 (VPAG…GFGQ) and 239–374 (GGEE…DLVP). Basic residues predominate over residues 86–96 (RRSHGSPRRRQ). Composition is skewed to pro residues over residues 255–268 (PERP…PPPD) and 313–332 (YANP…PPYL). The segment at 311–369 (PPYANPPPEAYGPPRALEPPYLPVRSSDTPPPGGERNGAQQGRLSVGSVYRPNQNGRGL) is interaction with FBLN5. The tract at residues 370–574 (PDLVPDPNYV…SATNCKIVQS (205 aa)) is lysyl-oxidase like. 5 cysteine pairs are disulfide-bonded: cysteine 395/cysteine 401, cysteine 448/cysteine 497, cysteine 481/cysteine 487, cysteine 508/cysteine 518, and cysteine 555/cysteine 569. Cu cation contacts are provided by histidine 449, histidine 451, and histidine 453. The lysine tyrosylquinone (Lys-Tyr); alternate cross-link spans 477 to 512 (KASFCLEDSTCDFGNLKRYACTSHTQGLSPGCYDTY). 2',4',5'-topaquinone; alternate is present on tyrosine 512.

The protein belongs to the lysyl oxidase family. In terms of assembly, interacts (via propeptide) with EFEMP2. Interacts with FBLN5. The cofactor is Cu cation. Lysine tyrosylquinone residue is required as a cofactor. In terms of processing, the lysine tyrosylquinone cross-link (LTQ) is generated by condensation of the epsilon-amino group of a lysine with a topaquinone produced by oxidation of tyrosine. Post-translationally, proteolytic processing by a furin-like protease causes removal of N-terminal propeptide resulting in an enzyme largely inactive, but further proteolytic processing by BMP1 results in enzyme activation. Expressed in ocular tissues including the iris, ciliary body, lens and optic nerve. Not detected in the retina.

It localises to the secreted. It is found in the extracellular space. The protein resides in the extracellular matrix. The catalysed reaction is L-lysyl-[protein] + O2 + H2O = (S)-2-amino-6-oxohexanoyl-[protein] + H2O2 + NH4(+). Catalyzes the oxidative deamination of lysine and hydroxylysine residues in collagen and elastin, resulting in the formation of covalent cross-linkages, and the stabilization of collagen and elastin fibers. Essential for the elastic fiber homeostasis and for their maintenance at adult age. The chain is Lysyl oxidase homolog 1 (LOXL1) from Homo sapiens (Human).